The sequence spans 195 residues: MKNKSVIEEADDVRRAVEMVQLGARMQMLEVETRLSREKLLRIYKEVRGASPPKGMLPFSTDWFMTWQPNVHSSLFMNLYRYFTGPAGVHGLDAILKSYHLYLDHIETGVIEPALSLTRAWTLVRFFDADLLQMAACTRCGGEFVAHAHDPVHDYVCGLCNMPSRAGSARRKTTTRKAVAPTHKTTAASRKAVVA.

Zn(2+)-binding residues include Cys-137, Cys-140, Cys-157, and Cys-160. Residues 165–195 (RAGSARRKTTTRKAVAPTHKTTAASRKAVVA) are disordered.

This sequence belongs to the FlhC family. Heterohexamer composed of two FlhC and four FlhD subunits. Each FlhC binds a FlhD dimer, forming a heterotrimer, and a hexamer assembles by dimerization of two heterotrimers. Zn(2+) is required as a cofactor.

The protein localises to the cytoplasm. Functions in complex with FlhD as a master transcriptional regulator that regulates transcription of several flagellar and non-flagellar operons by binding to their promoter region. Activates expression of class 2 flagellar genes, including fliA, which is a flagellum-specific sigma factor that turns on the class 3 genes. Also regulates genes whose products function in a variety of physiological pathways. This chain is Flagellar transcriptional regulator FlhC, found in Thauera aminoaromatica.